We begin with the raw amino-acid sequence, 474 residues long: tRNA-2-methylthio-N(6)-dimethylallyladenosine synthase (474 aa).

The MTTase N-terminal domain occupies 3–120 (KKLHIKTWGC…LPDMIEQVRR (118 aa)). [4Fe-4S] cluster contacts are provided by Cys12, Cys49, Cys83, Cys157, Cys161, and Cys164. The 233-residue stretch at 143 to 375 (RAEGPTAFVS…QDRITQQAMR (233 aa)) folds into the Radical SAM core domain. In terms of domain architecture, TRAM spans 378-441 (RHMMGTVQRI…TNSLRGKFIR (64 aa)).

It belongs to the methylthiotransferase family. MiaB subfamily. Monomer. Requires [4Fe-4S] cluster as cofactor.

It is found in the cytoplasm. The catalysed reaction is N(6)-dimethylallyladenosine(37) in tRNA + (sulfur carrier)-SH + AH2 + 2 S-adenosyl-L-methionine = 2-methylsulfanyl-N(6)-dimethylallyladenosine(37) in tRNA + (sulfur carrier)-H + 5'-deoxyadenosine + L-methionine + A + S-adenosyl-L-homocysteine + 2 H(+). Functionally, catalyzes the methylthiolation of N6-(dimethylallyl)adenosine (i(6)A), leading to the formation of 2-methylthio-N6-(dimethylallyl)adenosine (ms(2)i(6)A) at position 37 in tRNAs that read codons beginning with uridine. The sequence is that of tRNA-2-methylthio-N(6)-dimethylallyladenosine synthase from Shewanella sp. (strain W3-18-1).